The chain runs to 212 residues: Large ribosomal subunit protein uL3 (212 aa).

Residues 135-161 (MTHGNSLSHRAPGSIGQNQSPGKVFKG) are disordered. Gln153 carries the N5-methylglutamine modification.

Belongs to the universal ribosomal protein uL3 family. In terms of assembly, part of the 50S ribosomal subunit. Forms a cluster with proteins L14 and L19. In terms of processing, methylated by PrmB.

Its function is as follows. One of the primary rRNA binding proteins, it binds directly near the 3'-end of the 23S rRNA, where it nucleates assembly of the 50S subunit. This Alteromonas mediterranea (strain DSM 17117 / CIP 110805 / LMG 28347 / Deep ecotype) protein is Large ribosomal subunit protein uL3.